Reading from the N-terminus, the 654-residue chain is tRNA uridine 5-carboxymethylaminomethyl modification enzyme MnmG (654 aa).

17-22 (GGGHAG) is a binding site for FAD. 289–303 (GPRYCPSIEDKIVKF) contacts NAD(+).

It belongs to the MnmG family. Homodimer. Heterotetramer of two MnmE and two MnmG subunits. FAD is required as a cofactor.

The protein localises to the cytoplasm. Functionally, NAD-binding protein involved in the addition of a carboxymethylaminomethyl (cmnm) group at the wobble position (U34) of certain tRNAs, forming tRNA-cmnm(5)s(2)U34. The chain is tRNA uridine 5-carboxymethylaminomethyl modification enzyme MnmG from Prochlorococcus marinus (strain MIT 9515).